A 351-amino-acid polypeptide reads, in one-letter code: UDP-N-acetylglucosamine--N-acetylmuramyl-(pentapeptide) pyrophosphoryl-undecaprenol N-acetylglucosamine transferase (351 aa).

UDP-N-acetyl-alpha-D-glucosamine-binding positions include 13-15 (TGG), Asn125, Arg161, Ser189, Ile241, 260-265 (ALTVCE), and Gln285.

The protein belongs to the glycosyltransferase 28 family. MurG subfamily.

It localises to the cell inner membrane. The enzyme catalyses di-trans,octa-cis-undecaprenyl diphospho-N-acetyl-alpha-D-muramoyl-L-alanyl-D-glutamyl-meso-2,6-diaminopimeloyl-D-alanyl-D-alanine + UDP-N-acetyl-alpha-D-glucosamine = di-trans,octa-cis-undecaprenyl diphospho-[N-acetyl-alpha-D-glucosaminyl-(1-&gt;4)]-N-acetyl-alpha-D-muramoyl-L-alanyl-D-glutamyl-meso-2,6-diaminopimeloyl-D-alanyl-D-alanine + UDP + H(+). It participates in cell wall biogenesis; peptidoglycan biosynthesis. Its function is as follows. Cell wall formation. Catalyzes the transfer of a GlcNAc subunit on undecaprenyl-pyrophosphoryl-MurNAc-pentapeptide (lipid intermediate I) to form undecaprenyl-pyrophosphoryl-MurNAc-(pentapeptide)GlcNAc (lipid intermediate II). The sequence is that of UDP-N-acetylglucosamine--N-acetylmuramyl-(pentapeptide) pyrophosphoryl-undecaprenol N-acetylglucosamine transferase from Haemophilus influenzae (strain 86-028NP).